The following is a 180-amino-acid chain: ATP-dependent protease subunit HslV (180 aa).

Threonine 8 is an active-site residue. Na(+)-binding residues include serine 165, cysteine 168, and threonine 171.

The protein belongs to the peptidase T1B family. HslV subfamily. In terms of assembly, a double ring-shaped homohexamer of HslV is capped on each side by a ring-shaped HslU homohexamer. The assembly of the HslU/HslV complex is dependent on binding of ATP.

Its subcellular location is the cytoplasm. It catalyses the reaction ATP-dependent cleavage of peptide bonds with broad specificity.. With respect to regulation, allosterically activated by HslU binding. Protease subunit of a proteasome-like degradation complex believed to be a general protein degrading machinery. This Staphylococcus saprophyticus subsp. saprophyticus (strain ATCC 15305 / DSM 20229 / NCIMB 8711 / NCTC 7292 / S-41) protein is ATP-dependent protease subunit HslV.